The primary structure comprises 889 residues: DNA gyrase subunit A (889 aa).

Residues 35-501 enclose the Topo IIA-type catalytic domain; that stretch reads LPDVRDGLKP…GFEDLEDEDL (467 aa). Catalysis depends on Tyr123, which acts as the O-(5'-phospho-DNA)-tyrosine intermediate. The GyrA-box motif lies at 528-534; the sequence is QNRGGRG. Positions 811–889 are disordered; it reads KEDAEDETNE…IQQSLDEDEE (79 aa). Residues 813 to 823 are compositionally biased toward acidic residues; the sequence is DAEDETNEDEQ. Residues 863–875 show a composition bias toward basic and acidic residues; the sequence is DGRIEVRQDFMDR. Residues 876–889 show a composition bias toward acidic residues; the sequence is VEEDIQQSLDEDEE.

The protein belongs to the type II topoisomerase GyrA/ParC subunit family. As to quaternary structure, heterotetramer, composed of two GyrA and two GyrB chains. In the heterotetramer, GyrA contains the active site tyrosine that forms a transient covalent intermediate with DNA, while GyrB binds cofactors and catalyzes ATP hydrolysis.

The protein resides in the cytoplasm. The catalysed reaction is ATP-dependent breakage, passage and rejoining of double-stranded DNA.. Functionally, a type II topoisomerase that negatively supercoils closed circular double-stranded (ds) DNA in an ATP-dependent manner to modulate DNA topology and maintain chromosomes in an underwound state. Negative supercoiling favors strand separation, and DNA replication, transcription, recombination and repair, all of which involve strand separation. Also able to catalyze the interconversion of other topological isomers of dsDNA rings, including catenanes and knotted rings. Type II topoisomerases break and join 2 DNA strands simultaneously in an ATP-dependent manner. The sequence is that of DNA gyrase subunit A from Staphylococcus aureus.